A 402-amino-acid polypeptide reads, in one-letter code: D-galactonate dehydratase family member EGBG_02030 (402 aa).

Residue D207 participates in Mg(2+) binding. Residue H209 participates in D-arabinonate binding. 2 residues coordinate Mg(2+): E233 and E259. The D-arabinonate site is built by E259, R280, H309, and E336.

The protein belongs to the mandelate racemase/muconate lactonizing enzyme family. GalD subfamily.

Its function is as follows. Has no detectable activity with D-mannonate and with a panel of 70 other acid sugars (in vitro), in spite of the conservation of the residues that are expected to be important for catalytic activity and cofactor binding. May have evolved a divergent function. The protein is D-galactonate dehydratase family member EGBG_02030 of Enterococcus gallinarum (strain EG2).